The sequence spans 154 residues: Ribonuclease P protein component (154 aa).

Belongs to the RnpA family. In terms of assembly, consists of a catalytic RNA component (M1 or rnpB) and a protein subunit.

The enzyme catalyses Endonucleolytic cleavage of RNA, removing 5'-extranucleotides from tRNA precursor.. RNaseP catalyzes the removal of the 5'-leader sequence from pre-tRNA to produce the mature 5'-terminus. It can also cleave other RNA substrates such as 4.5S RNA. The protein component plays an auxiliary but essential role in vivo by binding to the 5'-leader sequence and broadening the substrate specificity of the ribozyme. The protein is Ribonuclease P protein component of Chlorobaculum tepidum (strain ATCC 49652 / DSM 12025 / NBRC 103806 / TLS) (Chlorobium tepidum).